A 441-amino-acid polypeptide reads, in one-letter code: Tol-Pal system protein TolB (441 aa).

A signal peptide spans 1–39 (MPAMTPAFRRADLTGFLRTYGAALILLLAAMLAWQPAQA).

It belongs to the TolB family. As to quaternary structure, the Tol-Pal system is composed of five core proteins: the inner membrane proteins TolA, TolQ and TolR, the periplasmic protein TolB and the outer membrane protein Pal. They form a network linking the inner and outer membranes and the peptidoglycan layer.

It localises to the periplasm. Part of the Tol-Pal system, which plays a role in outer membrane invagination during cell division and is important for maintaining outer membrane integrity. The polypeptide is Tol-Pal system protein TolB (Bordetella parapertussis (strain 12822 / ATCC BAA-587 / NCTC 13253)).